Here is a 306-residue protein sequence, read N- to C-terminus: Homoserine kinase (306 aa).

91-101 (PLARGLGSSAT) contributes to the ATP binding site.

The protein belongs to the GHMP kinase family. Homoserine kinase subfamily.

It localises to the cytoplasm. It catalyses the reaction L-homoserine + ATP = O-phospho-L-homoserine + ADP + H(+). It participates in amino-acid biosynthesis; L-threonine biosynthesis; L-threonine from L-aspartate: step 4/5. Catalyzes the ATP-dependent phosphorylation of L-homoserine to L-homoserine phosphate. The polypeptide is Homoserine kinase (Synechocystis sp. (strain ATCC 27184 / PCC 6803 / Kazusa)).